Here is a 232-residue protein sequence, read N- to C-terminus: 5'-methylthioadenosine/S-adenosylhomocysteine nucleosidase (232 aa).

Catalysis depends on glutamate 12, which acts as the Proton acceptor. Residues glycine 78, isoleucine 152, and 173–174 (ME) contribute to the substrate site. The active-site Proton donor is aspartate 197.

This sequence belongs to the PNP/UDP phosphorylase family. MtnN subfamily. Homodimer.

The enzyme catalyses S-adenosyl-L-homocysteine + H2O = S-(5-deoxy-D-ribos-5-yl)-L-homocysteine + adenine. The catalysed reaction is S-methyl-5'-thioadenosine + H2O = 5-(methylsulfanyl)-D-ribose + adenine. It carries out the reaction 5'-deoxyadenosine + H2O = 5-deoxy-D-ribose + adenine. The protein operates within amino-acid biosynthesis; L-methionine biosynthesis via salvage pathway; S-methyl-5-thio-alpha-D-ribose 1-phosphate from S-methyl-5'-thioadenosine (hydrolase route): step 1/2. In terms of biological role, catalyzes the irreversible cleavage of the glycosidic bond in both 5'-methylthioadenosine (MTA) and S-adenosylhomocysteine (SAH/AdoHcy) to adenine and the corresponding thioribose, 5'-methylthioribose and S-ribosylhomocysteine, respectively. Also cleaves 5'-deoxyadenosine, a toxic by-product of radical S-adenosylmethionine (SAM) enzymes, into 5-deoxyribose and adenine. Thus, is required for in vivo function of the radical SAM enzymes biotin synthase and lipoic acid synthase, that are inhibited by 5'-deoxyadenosine accumulation. This Salmonella enteritidis PT4 (strain P125109) protein is 5'-methylthioadenosine/S-adenosylhomocysteine nucleosidase.